The chain runs to 1011 residues: MKIRINDLARELEVKSKAILDALTKVGVTEKKTHSSSIEDHEAVLVKKYIHEHGTEESPRRRSAGEDEFKPKIDLSKISKPGDVLKALTQKAAPPPPPPPPPRPAVKAPSPVSQEPRPPAVPPAPQKPAVFARPASETVHTPPEPPKPRFITPASVAAQRPVITPPKPPVPPAPPVAVAPPAVIEPAAPAEEPKAAAPATTAPEAPEVKAPVSPERVAPAADTGAHVTAKPEAPAAPGAATPAPTPGRPLPGVPLRQQTPGRRMIVPQTGPRPVYSAPPPAPPRPTPPPQMSQGAGTRPGMPVRGQPIFQRRPQSGPGGGSGGPGGFQRPGGPPRPGDRPRGPHPTRQFPSGPRPMGGIGLAPPGAPANKPAGRPAPARRPGQRYVPRGQKEGPMKGFVPPPRLSLSNEPLPITRNITISEGISVKDLAEKLGIRAKDLIARLLARGVFATVNQTLEASLASEMANHFGASTDVITFEDQLAQETAKAAGETPEEAAANAVVRPPVVTIMGHVDHGKTSLLDAIRATDVAGGEAGGITQHIGAYKVAIGDPNSPAFGREIVFLDTPGHEAFTRMRARGSKITDIVVIVVAADDGVMPQTVEAIDHARAANVPIIVAVNKIDKPDAMPERVKKQLADRGLMPEDWGGNTVFVDVSAKQKTNLNLLMEMICLVADLGDLKANPDRMASGTVVEAKLDRGRGPVATVLVQNGTLRTSDNFVVGNAFGKVRAMFNDRGVSLDTAGPSTPVEIIGLETLPQAGDQFTVVADREKARDISEYREGRAREAQLAKSSRVSLEGLAEQLKTAGQKDLPIILKGDVQGSVEVLNDLLSKMSTEKVKITMIRSGVGAITESDVLLASASNAIIIGFNVRPERKAQELAVQEGVDIRLHSIIYELQDEMKKAMLGLLEPIIKETYQGRADVKDTFRIPKVGTIAGCQVADGIIKRDSHVRLVRDNVVIYTGKIGSLKRFKDDASEVRNGMECGIGIAGYGDIRSGDVIEAFTSEKIAADSLH.

The span at 49–77 (YIHEHGTEESPRRRSAGEDEFKPKIDLSK) shows a compositional bias: basic and acidic residues. 2 disordered regions span residues 49 to 152 (YIHE…RFIT) and 187 to 407 (AAPA…LSLS). Positions 93–104 (APPPPPPPPPRP) are enriched in pro residues. Residues 105-115 (AVKAPSPVSQE) show a composition bias toward low complexity. Residues 116–126 (PRPPAVPPAPQ) show a composition bias toward pro residues. 2 stretches are compositionally biased toward low complexity: residues 187–212 (AAPAEEPKAAAPATTAPEAPEVKAPV) and 228–242 (TAKPEAPAAPGAATP). 2 stretches are compositionally biased toward pro residues: residues 243–252 (APTPGRPLPG) and 276–290 (SAPPPAPPRPTPPPQ). The span at 316-329 (GPGGGSGGPGGFQR) shows a compositional bias: gly residues. Residues 361–380 (LAPPGAPANKPAGRPAPARR) are compositionally biased toward low complexity. One can recognise a tr-type G domain in the interval 502–678 (VRPPVVTIMG…CLVADLGDLK (177 aa)). The G1 stretch occupies residues 511 to 518 (GHVDHGKT). Residue 511-518 (GHVDHGKT) participates in GTP binding. Residues 536–540 (GITQH) form a G2 region. Residues 564-567 (DTPG) form a G3 region. Residues 564-568 (DTPGH) and 618-621 (NKID) contribute to the GTP site. Residues 618–621 (NKID) form a G4 region. A G5 region spans residues 654 to 656 (SAK).

This sequence belongs to the TRAFAC class translation factor GTPase superfamily. Classic translation factor GTPase family. IF-2 subfamily.

The protein localises to the cytoplasm. One of the essential components for the initiation of protein synthesis. Protects formylmethionyl-tRNA from spontaneous hydrolysis and promotes its binding to the 30S ribosomal subunits. Also involved in the hydrolysis of GTP during the formation of the 70S ribosomal complex. The sequence is that of Translation initiation factor IF-2 from Koribacter versatilis (strain Ellin345).